The following is a 126-amino-acid chain: Ribosome-binding factor A (126 aa).

The protein belongs to the RbfA family. Monomer. Binds 30S ribosomal subunits, but not 50S ribosomal subunits or 70S ribosomes.

It localises to the cytoplasm. One of several proteins that assist in the late maturation steps of the functional core of the 30S ribosomal subunit. Associates with free 30S ribosomal subunits (but not with 30S subunits that are part of 70S ribosomes or polysomes). Required for efficient processing of 16S rRNA. May interact with the 5'-terminal helix region of 16S rRNA. The chain is Ribosome-binding factor A from Azoarcus sp. (strain BH72).